Here is a 361-residue protein sequence, read N- to C-terminus: Sensor protein VanSC (361 aa).

Helical transmembrane passes span 16–36 (FVTT…IRFI) and 59–79 (WLFC…IYYM). The region spanning 144-359 (YLAHDLRTPL…IFNVRLPKPA (216 aa)) is the Histidine kinase domain. Residue H147 is modified to Phosphohistidine; by autocatalysis. A Mg(2+)-binding site is contributed by E252.

Autophosphorylated.

It localises to the membrane. It catalyses the reaction ATP + protein L-histidine = ADP + protein N-phospho-L-histidine.. The sequence is that of Sensor protein VanSC from Enterococcus gallinarum.